We begin with the raw amino-acid sequence, 295 residues long: ATP synthase gamma chain (295 aa).

The protein belongs to the ATPase gamma chain family. F-type ATPases have 2 components, CF(1) - the catalytic core - and CF(0) - the membrane proton channel. CF(1) has five subunits: alpha(3), beta(3), gamma(1), delta(1), epsilon(1). CF(0) has three main subunits: a, b and c.

The protein resides in the cell inner membrane. Produces ATP from ADP in the presence of a proton gradient across the membrane. The gamma chain is believed to be important in regulating ATPase activity and the flow of protons through the CF(0) complex. This is ATP synthase gamma chain from Sulfurimonas denitrificans (strain ATCC 33889 / DSM 1251) (Thiomicrospira denitrificans (strain ATCC 33889 / DSM 1251)).